A 431-amino-acid chain; its full sequence is Adenylosuccinate lyase (431 aa).

N(6)-(1,2-dicarboxyethyl)-AMP-binding positions include 4–5, 67–69, and 93–94; these read RY, RHD, and TS. The active-site Proton donor/acceptor is H141. Q212 lines the N(6)-(1,2-dicarboxyethyl)-AMP pocket. S262 acts as the Proton donor/acceptor in catalysis. N(6)-(1,2-dicarboxyethyl)-AMP is bound by residues S263, 268–270, N276, and 307–311; these read KRN and SAERI.

This sequence belongs to the lyase 1 family. Adenylosuccinate lyase subfamily. As to quaternary structure, homodimer and homotetramer. Residues from neighboring subunits contribute catalytic and substrate-binding residues to each active site.

It carries out the reaction N(6)-(1,2-dicarboxyethyl)-AMP = fumarate + AMP. The enzyme catalyses (2S)-2-[5-amino-1-(5-phospho-beta-D-ribosyl)imidazole-4-carboxamido]succinate = 5-amino-1-(5-phospho-beta-D-ribosyl)imidazole-4-carboxamide + fumarate. The protein operates within purine metabolism; AMP biosynthesis via de novo pathway; AMP from IMP: step 2/2. It participates in purine metabolism; IMP biosynthesis via de novo pathway; 5-amino-1-(5-phospho-D-ribosyl)imidazole-4-carboxamide from 5-amino-1-(5-phospho-D-ribosyl)imidazole-4-carboxylate: step 2/2. Catalyzes two reactions in de novo purine nucleotide biosynthesis. Catalyzes the breakdown of 5-aminoimidazole- (N-succinylocarboxamide) ribotide (SAICAR or 2-[5-amino-1-(5-phospho-beta-D-ribosyl)imidazole-4-carboxamido]succinate) to 5-aminoimidazole-4-carboxamide ribotide (AICAR or 5-amino-1-(5-phospho-beta-D-ribosyl)imidazole-4-carboxamide) and fumarate, and of adenylosuccinate (ADS or N(6)-(1,2-dicarboxyethyl)-AMP) to adenosine monophosphate (AMP) and fumarate. The sequence is that of Adenylosuccinate lyase (purB) from Staphylococcus epidermidis (strain ATCC 35984 / DSM 28319 / BCRC 17069 / CCUG 31568 / BM 3577 / RP62A).